The chain runs to 412 residues: Imidazolonepropionase (412 aa).

Fe(3+)-binding residues include His-73 and His-75. Residues His-73 and His-75 each coordinate Zn(2+). 4-imidazolone-5-propanoate-binding residues include Arg-82, Tyr-145, and His-178. Tyr-145 provides a ligand contact to N-formimidoyl-L-glutamate. Position 247 (His-247) interacts with Fe(3+). His-247 is a Zn(2+) binding site. Gln-250 lines the 4-imidazolone-5-propanoate pocket. A Fe(3+)-binding site is contributed by Asp-322. Position 322 (Asp-322) interacts with Zn(2+). Positions 324 and 326 each coordinate N-formimidoyl-L-glutamate. Residue Ser-327 coordinates 4-imidazolone-5-propanoate.

This sequence belongs to the metallo-dependent hydrolases superfamily. HutI family. Requires Zn(2+) as cofactor. The cofactor is Fe(3+).

The protein localises to the cytoplasm. The enzyme catalyses 4-imidazolone-5-propanoate + H2O = N-formimidoyl-L-glutamate. Its pathway is amino-acid degradation; L-histidine degradation into L-glutamate; N-formimidoyl-L-glutamate from L-histidine: step 3/3. Catalyzes the hydrolytic cleavage of the carbon-nitrogen bond in imidazolone-5-propanoate to yield N-formimidoyl-L-glutamate. It is the third step in the universal histidine degradation pathway. The chain is Imidazolonepropionase from Shewanella amazonensis (strain ATCC BAA-1098 / SB2B).